A 297-amino-acid polypeptide reads, in one-letter code: Mitochondrial substrate carrier family protein P (297 aa).

Solcar repeat units lie at residues 12–98 (KPSW…IKNH), 104–189 (SSSF…LKRI), and 201–293 (ISGT…LSNF). 6 consecutive transmembrane segments (helical) span residues 15-35 (WVSFLSGGLAGVTAKSAVAPL), 66-86 (GIKGLWRGNSATILRVFPYAA), 107-127 (FQIFLAGSAAGGIAVCATYPL), 165-185 (IQPTLIGILPYGGISFSTFEF), 207-227 (LIAGGIAGGVAQTVAYPFDVV), and 262-282 (ILALYKGLSINYVKVIPTASI).

This sequence belongs to the mitochondrial carrier (TC 2.A.29) family.

Its subcellular location is the mitochondrion inner membrane. Its function is as follows. Mitochondrial solute carriers shuttle metabolites, nucleotides, and cofactors through the mitochondrial inner membrane. Required for the accumulation of coenzyme A in the mitochondrial matrix. This is Mitochondrial substrate carrier family protein P (mcfP) from Dictyostelium discoideum (Social amoeba).